Here is a 330-residue protein sequence, read N- to C-terminus: tRNA U34 carboxymethyltransferase (330 aa).

Carboxy-S-adenosyl-L-methionine is bound by residues Lys91, Trp105, Lys110, Gly130, 152 to 154 (DPS), 181 to 182 (IE), Met196, Tyr200, and Arg315.

It belongs to the class I-like SAM-binding methyltransferase superfamily. CmoB family. In terms of assembly, homotetramer.

The catalysed reaction is carboxy-S-adenosyl-L-methionine + 5-hydroxyuridine(34) in tRNA = 5-carboxymethoxyuridine(34) in tRNA + S-adenosyl-L-homocysteine + H(+). Catalyzes carboxymethyl transfer from carboxy-S-adenosyl-L-methionine (Cx-SAM) to 5-hydroxyuridine (ho5U) to form 5-carboxymethoxyuridine (cmo5U) at position 34 in tRNAs. This Shewanella denitrificans (strain OS217 / ATCC BAA-1090 / DSM 15013) protein is tRNA U34 carboxymethyltransferase.